The sequence spans 369 residues: tRNA/tmRNA (uracil-C(5))-methyltransferase (369 aa).

S-adenosyl-L-methionine-binding residues include Q193, Y221, N226, E242, and D302. Residue C327 is the Nucleophile of the active site. The active-site Proton acceptor is the E361.

This sequence belongs to the class I-like SAM-binding methyltransferase superfamily. RNA M5U methyltransferase family. TrmA subfamily.

The catalysed reaction is uridine(54) in tRNA + S-adenosyl-L-methionine = 5-methyluridine(54) in tRNA + S-adenosyl-L-homocysteine + H(+). The enzyme catalyses uridine(341) in tmRNA + S-adenosyl-L-methionine = 5-methyluridine(341) in tmRNA + S-adenosyl-L-homocysteine + H(+). Functionally, dual-specificity methyltransferase that catalyzes the formation of 5-methyluridine at position 54 (m5U54) in all tRNAs, and that of position 341 (m5U341) in tmRNA (transfer-mRNA). The polypeptide is tRNA/tmRNA (uracil-C(5))-methyltransferase (Sulfurimonas denitrificans (strain ATCC 33889 / DSM 1251) (Thiomicrospira denitrificans (strain ATCC 33889 / DSM 1251))).